The sequence spans 370 residues: MVGKLKQNLLLACLVISSVTVFYLGQHAMECHHRIEERSQPARLENPKATVRTGLDIKANKTFTYHKNMPLIFIGGVPRSGTTLMRAMLDAHPDIRCGEETRVIPRILALKQMWSRSSKEKIRLDEAGVTDEVLDSAMQAFLLEVIVKHGEPAPYLCNKDPFALKSLTYLARLFPNAKFLLMVRDGRASVHSMISRKVTIAGFDLNSYRDCLTKWNRAIETMYNQCMEVGYKKCMLVHYEQLVLHPERWMRTLLKFLHIPWNHSVLHHEEMIGKAGGVSLSKVERSTDQVIKPVNVGALSKWVGKIPPDVLQDMAVIAPMLAKLGYDPYANPPNYGKPDPKILENTRRVHKGEFQLPDFLKEKPQTEQVE.

Topologically, residues 1-8 (MVGKLKQN) are cytoplasmic. A helical; Signal-anchor for type II membrane protein membrane pass occupies residues 9 to 25 (LLLACLVISSVTVFYLG). Over 26-370 (QHAMECHHRI…KEKPQTEQVE (345 aa)) the chain is Lumenal. A glycan (N-linked (GlcNAc...) asparagine) is linked at Asn60. 79-83 (RSGTT) lines the 3'-phosphoadenylyl sulfate pocket. Cys97 and Cys157 are disulfide-bonded. Catalysis depends on Glu100, which acts as the Proton donor/acceptor. The tract at residues 102–106 (RVIPR) is interaction with peptide substrate. Residues Arg184, Ser192, and Arg196 each contribute to the 3'-phosphoadenylyl sulfate site. Cysteines 226 and 234 form a disulfide. Tyr239 contributes to the 3'-phosphoadenylyl sulfate binding site. An N-linked (GlcNAc...) asparagine glycan is attached at Asn262. 3'-phosphoadenylyl sulfate-binding positions include 286 to 295 (STDQVIKPVN) and Lys301.

This sequence belongs to the protein sulfotransferase family. Homodimer. Can also form heterodimers with TPST2. In terms of processing, N-glycosylated.

It localises to the golgi apparatus membrane. It carries out the reaction L-tyrosyl-[protein] + 3'-phosphoadenylyl sulfate = O-sulfo-L-tyrosine-[protein] + adenosine 3',5'-bisphosphate + H(+). In terms of biological role, catalyzes the O-sulfation of tyrosine residues within acidic motifs of polypeptides, using 3'-phosphoadenylyl sulfate (PAPS) as cosubstrate. This Rattus norvegicus (Rat) protein is Protein-tyrosine sulfotransferase 1 (Tpst1).